Here is a 49-residue protein sequence, read N- to C-terminus: Large ribosomal subunit protein bL33B (49 aa).

This sequence belongs to the bacterial ribosomal protein bL33 family.

The sequence is that of Large ribosomal subunit protein bL33B from Limosilactobacillus fermentum (strain NBRC 3956 / LMG 18251) (Lactobacillus fermentum).